The following is a 339-amino-acid chain: DNA-directed RNA polymerase subunit alpha (339 aa).

Residues 1 to 235 (MVLQKNWQSL…DQLQLFINFD (235 aa)) are alpha N-terminal domain (alpha-NTD). The segment at 251–339 (FNRNLLRKVD…DLAKRLDEPF (89 aa)) is alpha C-terminal domain (alpha-CTD).

It belongs to the RNA polymerase alpha chain family. Homodimer. The RNAP catalytic core consists of 2 alpha, 1 beta, 1 beta' and 1 omega subunit. When a sigma factor is associated with the core the holoenzyme is formed, which can initiate transcription.

It carries out the reaction RNA(n) + a ribonucleoside 5'-triphosphate = RNA(n+1) + diphosphate. In terms of biological role, DNA-dependent RNA polymerase catalyzes the transcription of DNA into RNA using the four ribonucleoside triphosphates as substrates. This Gluconacetobacter diazotrophicus (strain ATCC 49037 / DSM 5601 / CCUG 37298 / CIP 103539 / LMG 7603 / PAl5) protein is DNA-directed RNA polymerase subunit alpha.